A 299-amino-acid polypeptide reads, in one-letter code: Probable transport accessory protein MmpS3 (299 aa).

Residues 1–72 (MSGPNPPGRE…EHVTGGPYVP (72 aa)) are disordered. Residues 101–121 (VVGVAAIIAAVALVVSVSLLV) traverse the membrane as a helical segment. Residues 128–139 (KLATGDTTSSAP) show a composition bias toward polar residues. The segment at 128 to 213 (KLATGDTTSS…TTTTPTGPRQ (86 aa)) is disordered. Residues 150–163 (PAPPPPPPAPPPTT) show a composition bias toward pro residues. The segment covering 164–176 (EIPTATETQTVTV) has biased composition (low complexity). The span at 177-193 (TPPPPPPPATTTAPPPA) shows a compositional bias: pro residues.

The protein belongs to the MmpS family.

It is found in the cell membrane. This is Probable transport accessory protein MmpS3 (mmpS3) from Mycobacterium tuberculosis (strain CDC 1551 / Oshkosh).